Reading from the N-terminus, the 238-residue chain is Leucine-rich repeat-containing protein 57 (238 aa).

LRR repeat units lie at residues 10–36 (LETSQKTGVFQLTGKGLTEFPEDLQKL), 37–62 (TANLRTVDLSNNKIEELPAFIGSFQH), 64–82 (KSFTISCNKLTSLPNDIGK), 83–106 (LKKLETLILNGNQLKQLPSSIGQL), 108–128 (SLRTLSLSGNQFKEFPSGLGT), 129–152 (LRQLDVLDLSKNQIRVVPAEVAEL), 154–173 (AIEINLNQNQISSVTQEVSR), and 174–199 (TPRLKVLRLEENCLELSSIPLSILTD).

In Danio rerio (Zebrafish), this protein is Leucine-rich repeat-containing protein 57 (lrrc57).